We begin with the raw amino-acid sequence, 473 residues long: MLKQQVGVIGMAVMGRNLALNIESKKYTVSIFNRTQSVTEEVINNNKEKKIFPYFSIKDFVNSLRKPRCILLMVKSGQPTDETIQFILPYLNKGDILIDGGNTFYKDSIRRSNDLMKCGINFIGMGVSGGELGALNGPSIMPGGSREAYDLVSSMLKKISAKFKNEPCVSYIGPNGAGHYVKMIHNGIEYGDMQLISESYFILKNVLNMKNEELSNTFSQWNKGELNSYLIEITKNIFLKKEKDGIHYLIDSILDHAEDKGTGKWISQDALELHEPLSLITESVFARYLSSLKDQRLIASKILKGPILKCISSQNKELFVEEVRRALYLGKIISYAQGFSQLKKASEKYSWNLQYGKIAKIFRAGCIIRADFLERITDAFKSNNVTNLLLTPYFSEISNKYEKSLRYITSYAIKYGIPVPTFASAISYYDNYRTMSSSANLIQAQRDYFGAHTYRRTDKKGYFHTNWLTKKEL.

NADP(+)-binding positions include 10–15 (GMAVMG), 33–35 (NRT), 74–76 (VKS), and Asn-102. Substrate contacts are provided by residues Asn-102 and 128–130 (SGG). Lys-182 (proton acceptor) is an active-site residue. 185–186 (HN) is a binding site for substrate. The active-site Proton donor is Glu-189. The substrate site is built by Tyr-190, Lys-260, Arg-287, Arg-446, and His-452.

The protein belongs to the 6-phosphogluconate dehydrogenase family. Homodimer.

The enzyme catalyses 6-phospho-D-gluconate + NADP(+) = D-ribulose 5-phosphate + CO2 + NADPH. Its pathway is carbohydrate degradation; pentose phosphate pathway; D-ribulose 5-phosphate from D-glucose 6-phosphate (oxidative stage): step 3/3. Functionally, catalyzes the oxidative decarboxylation of 6-phosphogluconate to ribulose 5-phosphate and CO(2), with concomitant reduction of NADP to NADPH. This Buchnera aphidicola subsp. Schizaphis graminum (strain Sg) protein is 6-phosphogluconate dehydrogenase, decarboxylating (gnd).